The sequence spans 74 residues: Exodeoxyribonuclease 7 small subunit (74 aa).

Belongs to the XseB family. As to quaternary structure, heterooligomer composed of large and small subunits.

Its subcellular location is the cytoplasm. The enzyme catalyses Exonucleolytic cleavage in either 5'- to 3'- or 3'- to 5'-direction to yield nucleoside 5'-phosphates.. Bidirectionally degrades single-stranded DNA into large acid-insoluble oligonucleotides, which are then degraded further into small acid-soluble oligonucleotides. This is Exodeoxyribonuclease 7 small subunit from Vesicomyosocius okutanii subsp. Calyptogena okutanii (strain HA).